The sequence spans 85 residues: Arminin 524 (85 aa).

The signal sequence occupies residues 1–18 (MKAVFAILFLAFIALTYA). Positions 19 to 57 (KSYDEVKEEIKNEVEREIFEDLEEESDELDNDVEEFNDA) are excised as a propeptide. Alanine 82 bears the Alanine amide mark.

This sequence belongs to the arminin family. As to expression, expressed in entodermal epithelium along the body column.

It is found in the secreted. The protein resides in the target cell membrane. Antimicrobial peptide with a broad-spectrum antimicrobial activity. Keeps its antibacterial activity under a wide range of salt concentrations that mimic physiological conditions of human blood, which is surprising, since Hydra is an obligate freshwater animal with nearly no salt tolerance. Does not affect red blood cells. This is Arminin 524 from Hydra oligactis (Brown hydra).